A 317-amino-acid chain; its full sequence is NADH kinase (317 aa).

It belongs to the NAD kinase family. In terms of assembly, homodimer. As to expression, ubiquitous.

It localises to the cytoplasm. The enzyme catalyses NADH + ATP = ADP + NADPH + H(+). With respect to regulation, two-fold decrease in activity in the presence of PPi, iodoacetate or para-chloromercuribenzoate. In terms of biological role, phosphorylates specifically NADH. Can phosphorylate NAD with a 100-fold decrease in efficiency compared to NADH. Prefers ATP as nucleoside triphosphate substrate. Can also utilize UTP, GTP and CTP. Key source of the cellular reductant NADPH which is an important antioxidant factor. This Arabidopsis thaliana (Mouse-ear cress) protein is NADH kinase (NADK3).